The chain runs to 335 residues: Glycerol-3-phosphate dehydrogenase [NAD(P)+] (335 aa).

NADPH is bound by residues Trp12 and Lys106. Residues Lys106, Gly136, and Ser138 each coordinate sn-glycerol 3-phosphate. Residue Ala140 coordinates NADPH. Sn-glycerol 3-phosphate-binding residues include Lys191, Asp244, Ser254, Arg255, and Asn256. The active-site Proton acceptor is the Lys191. Arg255 serves as a coordination point for NADPH. 2 residues coordinate NADPH: Val279 and Glu281.

The protein belongs to the NAD-dependent glycerol-3-phosphate dehydrogenase family.

Its subcellular location is the cytoplasm. The catalysed reaction is sn-glycerol 3-phosphate + NAD(+) = dihydroxyacetone phosphate + NADH + H(+). It catalyses the reaction sn-glycerol 3-phosphate + NADP(+) = dihydroxyacetone phosphate + NADPH + H(+). The protein operates within membrane lipid metabolism; glycerophospholipid metabolism. Its function is as follows. Catalyzes the reduction of the glycolytic intermediate dihydroxyacetone phosphate (DHAP) to sn-glycerol 3-phosphate (G3P), the key precursor for phospholipid synthesis. This chain is Glycerol-3-phosphate dehydrogenase [NAD(P)+], found in Fusobacterium nucleatum subsp. nucleatum (strain ATCC 25586 / DSM 15643 / BCRC 10681 / CIP 101130 / JCM 8532 / KCTC 2640 / LMG 13131 / VPI 4355).